The chain runs to 197 residues: Recombination protein RecR (197 aa).

Residues 55 to 70 (CVQCRDFTESEICTIC) form a C4-type zinc finger. The 96-residue stretch at 78 to 173 (QQLCVVESPA…RPSRLAQGMP (96 aa)) folds into the Toprim domain.

This sequence belongs to the RecR family.

Its function is as follows. May play a role in DNA repair. It seems to be involved in an RecBC-independent recombinational process of DNA repair. It may act with RecF and RecO. In Xanthomonas euvesicatoria pv. vesicatoria (strain 85-10) (Xanthomonas campestris pv. vesicatoria), this protein is Recombination protein RecR.